The sequence spans 398 residues: MKGSAVTGPFGLSAALSEREQAGLLRSRIATDGASGGRLRVAGRDYLNFSANDYLGLAGHSAIKTAFQGGIDRYGAGAGASPLVTGYSRAHQQLEETLADWLGVEAVLLFNCGFSANQAVLKALLGKDHLLWQDKLNHASLQEMGSQLPCKMKRFGHNDMTALERQLEPNRGLIVSEGVFSMDGDQGSWRELAALAAQSGNWLMIDDAHGLGVLGSEGRGTLAAQGVAPASVHIQMGTFGKALGVAGAFVGGSRELVDYLVNFARHYVYSTHMPAAQACAVSQSIELVRAADEARAHLGQLITRFRQGAQALGWQLGASDTPIQPLLVGESGAALQLAERLRECGVWAGAIRPPTVPVGTARLRITLSAAHREQDVDRLLEALGPRPSTDERGGAHGA.

A substrate-binding site is contributed by Arg-26. 113–114 contributes to the pyridoxal 5'-phosphate binding site; sequence GF. His-138 lines the substrate pocket. Pyridoxal 5'-phosphate is bound by residues Ser-181, His-209, and Thr-238. Lys-241 carries the post-translational modification N6-(pyridoxal phosphate)lysine. Thr-355 lines the substrate pocket.

It belongs to the class-II pyridoxal-phosphate-dependent aminotransferase family. BioF subfamily. Homodimer. The cofactor is pyridoxal 5'-phosphate.

The catalysed reaction is 6-carboxyhexanoyl-[ACP] + L-alanine + H(+) = (8S)-8-amino-7-oxononanoate + holo-[ACP] + CO2. It functions in the pathway cofactor biosynthesis; biotin biosynthesis. Catalyzes the decarboxylative condensation of pimeloyl-[acyl-carrier protein] and L-alanine to produce 8-amino-7-oxononanoate (AON), [acyl-carrier protein], and carbon dioxide. This chain is 8-amino-7-oxononanoate synthase, found in Aeromonas hydrophila subsp. hydrophila (strain ATCC 7966 / DSM 30187 / BCRC 13018 / CCUG 14551 / JCM 1027 / KCTC 2358 / NCIMB 9240 / NCTC 8049).